Here is a 160-residue protein sequence, read N- to C-terminus: uncharacterized protein (160 aa).

Residues 37–110 enclose the Cupin type-2 domain; it reads LMSLKPKEDI…TDYLKLYTIY (74 aa).

Its subcellular location is the virion. This is an uncharacterized protein from Acanthamoeba polyphaga mimivirus (APMV).